Consider the following 297-residue polypeptide: Ribosomal RNA small subunit methyltransferase H (297 aa).

S-adenosyl-L-methionine is bound by residues 35-37, Asp55, Phe82, Asp100, and Gln107; that span reads GGH.

Belongs to the methyltransferase superfamily. RsmH family.

Its subcellular location is the cytoplasm. It carries out the reaction cytidine(1402) in 16S rRNA + S-adenosyl-L-methionine = N(4)-methylcytidine(1402) in 16S rRNA + S-adenosyl-L-homocysteine + H(+). Functionally, specifically methylates the N4 position of cytidine in position 1402 (C1402) of 16S rRNA. This Chlamydia caviae (strain ATCC VR-813 / DSM 19441 / 03DC25 / GPIC) (Chlamydophila caviae) protein is Ribosomal RNA small subunit methyltransferase H.